A 608-amino-acid chain; its full sequence is Leucine aminopeptidase 2 (608 aa).

Residues 134–136 and 269–274 contribute to the substrate site; these read QCQ and PYGGME. Residue H298 coordinates Zn(2+). E299 functions as the Proton acceptor in the catalytic mechanism. Residues H302 and E321 each coordinate Zn(2+). Residue Y386 is the Proton donor of the active site.

Belongs to the peptidase M1 family. The cofactor is Zn(2+).

The protein localises to the cytoplasm. It localises to the nucleus. The catalysed reaction is an epoxide + H2O = an ethanediol. Aminopeptidase that preferentially cleaves di- and tripeptides. Also has low epoxide hydrolase activity (in vitro). Can hydrolyze the epoxide leukotriene LTA(4) but it forms preferentially 5,6-dihydroxy-7,9,11,14-eicosatetraenoic acid rather than the cytokine leukotriene B(4) as the product compared to the homologous mammalian enzyme (in vitro). The chain is Leucine aminopeptidase 2 from Sclerotinia sclerotiorum (strain ATCC 18683 / 1980 / Ss-1) (White mold).